Here is a 466-residue protein sequence, read N- to C-terminus: Cytochrome b561 and DOMON domain-containing protein At3g59070 (466 aa).

Residues 1–25 form the signal peptide; that stretch reads MSLSSRATLVVLCCLFMLIPSFTTA. Positions 57 to 172 constitute a DOMON domain; the sequence is LNSYLHFNYA…TVVNHLWQDG (116 aa). In terms of domain architecture, Cytochrome b561 spans 179-380; that stretch reads RLGMHAMSGD…MEILQFKKRW (202 aa). A run of 3 helical transmembrane segments spans residues 219–239, 252–272, and 287–307; these read IHAI…VMAA, WFYI…IGGL, and TLHT…ILSL. Heme b is bound by residues H220, H256, H289, and H325. A run of 2 helical transmembrane segments spans residues 327–347 and 355–375; these read TMGY…LSIL and IAYT…EILQ.

Heme b is required as a cofactor.

The protein localises to the membrane. May act as a catecholamine-responsive trans-membrane electron transporter. This chain is Cytochrome b561 and DOMON domain-containing protein At3g59070, found in Arabidopsis thaliana (Mouse-ear cress).